Consider the following 467-residue polypeptide: Inactive pancreatic lipase-related protein 1 (467 aa).

An N-terminal signal peptide occupies residues 1-17 (MLIFWTITLFLLGAAKG). Disulfide bonds link C21/C27 and C109/C120. S171 acts as the Nucleophile in catalysis. Residue D194 is the Charge relay system of the active site. Positions 205, 208, 210, and 213 each coordinate Ca(2+). C255 and C279 are oxidised to a cystine. The active-site Charge relay system is the H281. 3 cysteine pairs are disulfide-bonded: C303-C314, C317-C322, and C451-C467. Residues 356-467 (WRYGVSITLS…EDTLLTLTPC (112 aa)) enclose the PLAT domain.

The protein belongs to the AB hydrolase superfamily. Lipase family. As to expression, pancreas.

The protein resides in the secreted. May function as inhibitor of dietary triglyceride digestion. Lacks detectable lipase activity towards triglycerides, diglycerides, phosphatidylcholine, galactolipids or cholesterol esters (in vitro). In Homo sapiens (Human), this protein is Inactive pancreatic lipase-related protein 1 (PNLIPRP1).